Consider the following 296-residue polypeptide: Light-independent protochlorophyllide reductase iron-sulfur ATP-binding protein (296 aa).

Residues Gly39–Thr44 and Lys68 each bind ATP. Ser43 contacts Mg(2+). Residues Cys124 and Cys158 each contribute to the [4Fe-4S] cluster site. Asn209 to Arg210 is an ATP binding site.

This sequence belongs to the NifH/BchL/ChlL family. As to quaternary structure, homodimer. Protochlorophyllide reductase is composed of three subunits; ChlL, ChlN and ChlB. The cofactor is [4Fe-4S] cluster.

The catalysed reaction is chlorophyllide a + oxidized 2[4Fe-4S]-[ferredoxin] + 2 ADP + 2 phosphate = protochlorophyllide a + reduced 2[4Fe-4S]-[ferredoxin] + 2 ATP + 2 H2O. The protein operates within porphyrin-containing compound metabolism; chlorophyll biosynthesis (light-independent). Its function is as follows. Component of the dark-operative protochlorophyllide reductase (DPOR) that uses Mg-ATP and reduced ferredoxin to reduce ring D of protochlorophyllide (Pchlide) to form chlorophyllide a (Chlide). This reaction is light-independent. The L component serves as a unique electron donor to the NB-component of the complex, and binds Mg-ATP. The polypeptide is Light-independent protochlorophyllide reductase iron-sulfur ATP-binding protein (Prochlorococcus marinus (strain MIT 9303)).